Consider the following 575-residue polypeptide: Protein NRT1/ PTR FAMILY 5.6 (575 aa).

The next 2 membrane-spanning stretches (helical) occupy residues 44–64 (AALF…GLAT) and 88–108 (WSGV…AYLG). At Thr112 the chain carries Phosphothreonine. 10 helical membrane-spanning segments follow: residues 113-133 (VLVA…SWFI), 153-173 (VAFF…KPSL), 195-215 (FFNW…TAVA), 223-243 (WGVA…IFFI), 339-359 (LIIN…CATQ), 375-395 (IGGF…TLII), 420-440 (ILQR…IAAL), 457-477 (VIWL…TLVG), 493-513 (LGIA…NLLI), and 541-561 (FYWF…IVAK).

This sequence belongs to the major facilitator superfamily. Proton-dependent oligopeptide transporter (POT/PTR) (TC 2.A.17) family. Expressed in stems, shoots, leaves, flowers and siliques.

The protein localises to the membrane. This chain is Protein NRT1/ PTR FAMILY 5.6 (NPF5.6), found in Arabidopsis thaliana (Mouse-ear cress).